We begin with the raw amino-acid sequence, 193 residues long: Small ribosomal subunit protein uS7 (193 aa).

Belongs to the universal ribosomal protein uS7 family. In terms of assembly, part of the 30S ribosomal subunit.

In terms of biological role, one of the primary rRNA binding proteins, it binds directly to 16S rRNA where it nucleates assembly of the head domain of the 30S subunit. Is located at the subunit interface close to the decoding center. The protein is Small ribosomal subunit protein uS7 of Saccharolobus solfataricus (strain ATCC 35092 / DSM 1617 / JCM 11322 / P2) (Sulfolobus solfataricus).